The sequence spans 86 residues: Small ribosomal subunit protein uS15 (86 aa).

The tract at residues 1–22 is disordered; the sequence is MSIDTQKVIEDNKRSSADTGSP. Basic and acidic residues predominate over residues 7–16; the sequence is KVIEDNKRSS.

This sequence belongs to the universal ribosomal protein uS15 family. As to quaternary structure, part of the 30S ribosomal subunit. Forms a bridge to the 50S subunit in the 70S ribosome, contacting the 23S rRNA.

In terms of biological role, one of the primary rRNA binding proteins, it binds directly to 16S rRNA where it helps nucleate assembly of the platform of the 30S subunit by binding and bridging several RNA helices of the 16S rRNA. Its function is as follows. Forms an intersubunit bridge (bridge B4) with the 23S rRNA of the 50S subunit in the ribosome. In Stenotrophomonas maltophilia (strain R551-3), this protein is Small ribosomal subunit protein uS15.